The primary structure comprises 586 residues: Anaerobic glycerol-3-phosphate dehydrogenase subunit A1 (586 aa).

Residue S6–E34 participates in FAD binding. Residues G559–N586 form a disordered region. Positions A574 to N586 are enriched in acidic residues.

It belongs to the FAD-dependent glycerol-3-phosphate dehydrogenase family. In terms of assembly, composed of a catalytic GlpA/B dimer and of membrane bound GlpC. Requires FAD as cofactor. The cofactor is FMN.

Its subcellular location is the cell membrane. The catalysed reaction is a quinone + sn-glycerol 3-phosphate = dihydroxyacetone phosphate + a quinol. It participates in polyol metabolism; glycerol degradation via glycerol kinase pathway; glycerone phosphate from sn-glycerol 3-phosphate (anaerobic route): step 1/1. With respect to regulation, up-regulated by glycerol and no inhibition by glucose. Its function is as follows. Conversion of glycerol 3-phosphate to dihydroxyacetone phosphate. Required for growth on glycerol and for glycerol metabolism. The protein is Anaerobic glycerol-3-phosphate dehydrogenase subunit A1 (gpdA1) of Haloferax volcanii (strain ATCC 29605 / DSM 3757 / JCM 8879 / NBRC 14742 / NCIMB 2012 / VKM B-1768 / DS2) (Halobacterium volcanii).